The primary structure comprises 177 residues: Adenine phosphoribosyltransferase (177 aa).

Belongs to the purine/pyrimidine phosphoribosyltransferase family. As to quaternary structure, homodimer.

The protein resides in the cytoplasm. It catalyses the reaction AMP + diphosphate = 5-phospho-alpha-D-ribose 1-diphosphate + adenine. The protein operates within purine metabolism; AMP biosynthesis via salvage pathway; AMP from adenine: step 1/1. Functionally, catalyzes a salvage reaction resulting in the formation of AMP, that is energically less costly than de novo synthesis. The chain is Adenine phosphoribosyltransferase from Chlorobaculum tepidum (strain ATCC 49652 / DSM 12025 / NBRC 103806 / TLS) (Chlorobium tepidum).